A 721-amino-acid chain; its full sequence is Polyribonucleotide nucleotidyltransferase (721 aa).

2 residues coordinate Mg(2+): Asp511 and Asp517. The region spanning 577 to 637 is the KH domain; that stretch reads PSTDFFHINP…SGVQAAREHI (61 aa). In terms of domain architecture, S1 motif spans 654-721; sequence GDIHKGIVKK…KGNKISLGIA (68 aa).

The protein belongs to the polyribonucleotide nucleotidyltransferase family. It depends on Mg(2+) as a cofactor.

Its subcellular location is the cytoplasm. It carries out the reaction RNA(n+1) + phosphate = RNA(n) + a ribonucleoside 5'-diphosphate. Its function is as follows. Involved in mRNA degradation. Catalyzes the phosphorolysis of single-stranded polyribonucleotides processively in the 3'- to 5'-direction. The polypeptide is Polyribonucleotide nucleotidyltransferase (Sulfurimonas denitrificans (strain ATCC 33889 / DSM 1251) (Thiomicrospira denitrificans (strain ATCC 33889 / DSM 1251))).